Here is a 1351-residue protein sequence, read N- to C-terminus: Alpha-latrotoxin-Lh1a (1351 aa).

The N-terminal stretch at 1–7 (SLVRMRR) is a signal peptide. The segment at 4 to 7 (RMRR) is furin-like endopeptidase recognition region. The interval 226-245 (VLYALLYGTQTYVSVMFFLL) is helix H8 is the probable transmembrane region of the tetrameric pore inserted in the target cell membrane. Cys-401 and Cys-1054 are oxidised to a cystine. 22 ANK repeats span residues 446–477 (LYNTANNPDSAVGFKEFTKLNYDGANIRATFE), 478–509 (QGRTVFHAAAKSGNSRIMIGLTFLVKSNELNQ), 513–542 (KGYTPIHVAADSGNAGIVNLLIQRGVSINS), 547–577 (FLQTPLHLAAQRGFVTTFQRLMESPEININE), 581–610 (DGFTPLHYAVRGGERILEAFINQIRIDLNA), 614–644 (KGLTPFHLAIIKDDWPVASTLLGSKKVDVNA), 648–678 (NNMTALHYAAILGYLETTKQLINLKEINADV), 683–711 (GLLSALHYAILYKHDDVASFLLRSSNVNV), 717–746 (GGITPLHLAVIQGRTQILSLMFDIGVNIEQ), 750–779 (EKYTPLHLAAMSKYPELIQILLDQGSNFEA), 783–812 (SGATPLHLATFKGKSKAALILLNNEVNWRD), 816–846 (NGQMPIHGAAMNGLLDVAQAIISIDATVLDI), 850–879 (NSDTPLNLAAQKSHIDVIKYFIDQGADINT), 883–912 (TGHAPLLAFSKKGNLDMVKYLFDKNANVYI), 916–945 (DGINFFYYAVRNGHLNIVKYAMSEKDKFEW), 959–991 (EECAISHFAVCDAVQFDKIEIVKYFVTTLGNFA), 992–1019 (ICGPLHQAARYGHLDIEKYLVEEEDLNV), 1023–1052 (KPDTPLCYASENGHLAVVQYLVSNGAKVNH), 1056–1085 (NGMTAIDKAITKNHLQVVQFLAANGVDFRR), 1089–1119 (LGATPFLTAVSENAFDIAEYLIRENRQDIDI), 1125–1154 (DKETALHLAVYYKNLQMIKLLVKYGIDMTI), and 1158–1187 (YDKTALDIATDLKNSNIVEYLKTKSGKFRR). Positions 1184–1187 (KFRR) are furin-like endopeptidase recognition region. Positions 1188–1351 (EYKSSYGEHS…LGSVIMNSHS (164 aa)) are excised as a propeptide.

This sequence belongs to the cationic peptide 01 (latrotoxin) family. 03 (alpha-latrotoxin) subfamily. As to quaternary structure, homotetramer in membranes. Processed by furin-like proteases at both the N- and C-termini. In terms of tissue distribution, expressed in venom gland, cephalothorax, and abdomen tissues from both males and females.

It is found in the secreted. Its subcellular location is the target cell membrane. In terms of biological role, presynaptic neurotoxin that causes massive release of neurotransmitters from vertebrate (but not invertebrate) nerve terminals and endocrine cells via a complex mechanism involving activation of receptor(s) and toxin insertion into the plasma membrane with subsequent pore formation. Binds to neurexin-1-alpha (NRXN1) in a calcium dependent manner, adhesion G protein-coupled receptor L1 (ADGRL1, also termed latrophilin-1 and calcium-independent receptor of latrotoxin (CIRL)), and receptor-type tyrosine-protein phosphatase S (PTPRS), also termed PTP sigma. NRXN1 and PTPRS are suggested to provide a platform for binding and subsequent pore formation events. In contrast, binding to ADGRL1 does not involve oligomerization and channel formation, but direct downstream stimulation of the synaptic fusion machinery. Induces rapid muscle contracture and loss of twitch tension when added to the isolated and indirectly stimulated chick biventer cervicis nerve-muscle preparation. This is Alpha-latrotoxin-Lh1a from Latrodectus hasselti (Redback spider).